Here is a 395-residue protein sequence, read N- to C-terminus: MSQLDLGTQSLELERFPPQENSNTLQAWEAADEYLLQNIDLSQIDGRPVLVFNDQFGTLACALHAYRPFSSSDSYMSQLATAHNLRLNHLDESAVTLLSSVDDLPEAPKLVVIKIPKALALLEHQLRALRRVVAPDTVIIAGAKSRDVHNSTLQLFEKILGPTKTTLAWKKARLIHCEVADIPLADAPETIDWPLPNTDYIIHNHANVFSRNNLDIGARFFMEILPYDVTGKIADLGCGNGVVGLIALEQNPLAEMLFVDESYMAVASSELNITVNRPQDLSRCEFMVSHGLAGVERESLQLVLCNPPFHQQHAVSDHVAWQMFCDAKRCLKAGGELMIVGNRHLDYFHKLKRLFGNCETLDSNQKFMVLKSVKQASSRSEGGGSGSLDMSYSDF.

The protein belongs to the methyltransferase superfamily. RlmG family.

The protein resides in the cytoplasm. The enzyme catalyses guanosine(1835) in 23S rRNA + S-adenosyl-L-methionine = N(2)-methylguanosine(1835) in 23S rRNA + S-adenosyl-L-homocysteine + H(+). In terms of biological role, specifically methylates the guanine in position 1835 (m2G1835) of 23S rRNA. The chain is Ribosomal RNA large subunit methyltransferase G from Yersinia pseudotuberculosis serotype O:1b (strain IP 31758).